The chain runs to 832 residues: MFRWSCAFRLSRSLLQTRFLSTDPLLDQFKICLSEDQVFQLVGKNKARLSVTHVGYAINLLWQFQKEKPRMLRTIGQVRGHPEFIALRILAENKIEFMDDKALVEILYNILRFNLEAHDSLVQQLVMEGWRRLERFNLTALSKFAVCLVEQHMNMSPLMGRIASIVDGTLDDVQDARILSSLMVSIYGVISPTLRDRLVDKADSLVDTLDVSHFNHPRRIVQFLRNMKYTYRPLLEKCNSVFLQNVGQMDPENLSIIIGLYQSLQFNNAEFRLMARARLIETMDQCSDVASYTKLFAALGPMAGQDIREKLEEGILTMADEMNPTQLLAILGTMEEMECRNTLLIAKISSLLQKYLESYRPVELARITQAIVTLRCQTPELFSMLQKILERLLKSSFIPADVSMLARVISTLPAARVDEEILSKVDAILPQCSLSDLSSLALAIVKWVRTDQPSRSSTSGGLGNLLLKLNTCGRERIAKIDKIDLFLDELKYTTGDWLEEVLLKDTISTCERLIDQVTWKNVPEFALFITRTNYLCAQVLDKIALVATEDITKIHYSATYATLLPFVVLNYDPPNGEAFFDACIQHFLPHLNSFDPHLVVLLAYSLALAEYFPEELIKAVFNVDFLGRLDAQLETFSSALNMRIRLRLMELNRAVCLECPEFQIPWFHDRYCQQLQHRANGGISSVQRQIHQLLGEILGGINYAKVSVMTPYYHAIDFECILDKNKKPIPYLDQNVLSADLSKVQWGNGGPLQETKSLPPGAQRVAIEFLDSKAFSKNSSNIKGEYVMKKRHLEILGYHVVQIASFEWNSMELSTKDAWIDYLRKRIFADDV.

One can recognise an RAP domain in the interval 765-825 (VAIEFLDSKA…KDAWIDYLRK (61 aa)).

Belongs to the FAST kinase family.

It localises to the mitochondrion. In terms of biological role, may regulate the stability of some mitochondrial mRNA species. This is FAST kinase domain-containing protein 1, mitochondrial (fastkd1) from Xenopus tropicalis (Western clawed frog).